Reading from the N-terminus, the 183-residue chain is Inner membrane-spanning protein YciB (183 aa).

A run of 5 helical transmembrane segments spans residues Phe4–Met24, Met50–Asp70, Thr72–Ser92, Val119–Phe139, and Phe149–Leu169.

Belongs to the YciB family.

The protein localises to the cell inner membrane. In terms of biological role, plays a role in cell envelope biogenesis, maintenance of cell envelope integrity and membrane homeostasis. This is Inner membrane-spanning protein YciB from Aeromonas hydrophila subsp. hydrophila (strain ATCC 7966 / DSM 30187 / BCRC 13018 / CCUG 14551 / JCM 1027 / KCTC 2358 / NCIMB 9240 / NCTC 8049).